The following is a 178-amino-acid chain: Fatty-acid and retinol-binding protein 1 (178 aa).

The N-terminal stretch at 1 to 16 (MYHQLILMALIGVIMA) is a signal peptide. N-linked (GlcNAc...) asparagine glycosylation is found at asparagine 44 and asparagine 75. Coiled-coil stretches lie at residues 67–89 (DAALEALKNKSDKLYQKAVELRN) and 123–154 (KLDMEKIKQAARDIIAKYEALNEETKEELKAT). Residue asparagine 157 is glycosylated (N-linked (GlcNAc...) asparagine).

This sequence belongs to the fatty-acid and retinol-binding protein (FARBP) family. N-glycosylated.

It is found in the secreted. Binds retinol and different fatty acids. The sequence is that of Fatty-acid and retinol-binding protein 1 from Onchocerca gutturosa.